A 552-amino-acid polypeptide reads, in one-letter code: Formate--tetrahydrofolate ligase (552 aa).

62-69 (TPAGEGKS) serves as a coordination point for ATP.

This sequence belongs to the formate--tetrahydrofolate ligase family.

It carries out the reaction (6S)-5,6,7,8-tetrahydrofolate + formate + ATP = (6R)-10-formyltetrahydrofolate + ADP + phosphate. The protein operates within one-carbon metabolism; tetrahydrofolate interconversion. This Ligilactobacillus salivarius (strain UCC118) (Lactobacillus salivarius) protein is Formate--tetrahydrofolate ligase.